The sequence spans 760 residues: MSRPIVLHICLAFCSLLLLNFAAQCLAFPNLERREIVLLHAEKGQSERLNTDDLENDSVTSNTPVSGDPMIVLAGPSTMSLNKVFPSNKETSPVGAGLMQADGSNIYTATEPEVPAGEEVFGSSQPERMSPESRPSKATLTNPVMPTASLNIDEREEPSRGTIIQPTVEGTTEATQGFLSYVDDQLFATESPEGLSLGHSPLSLVNTKEMLTTSPRTEKFEANPEHKTTSFPGSKLTAGTEPSQMTADNTQATAATKHWLPTSESILSVEPETDSLLGAPEVTTSVSTAVAAAPVISDEWDDTKLESVSQIKTPKLGDNTETQVRMEISQTTQAPDIGMEVMEEGKALTEAADVSLKLPEMETHMETTLPMAHGGERASDQSSVTPTSPMGDTKVSVMNLVQDTADFVESTKENGAMFLETTVSISEYESEVHQPLGNRFKDIITQEMTTAVQAAEATVSLVTQEQQVATLEVTRGEDETKGGRELPSATVDAPRATQLSRRWEPLATVVSTTPIPVSFKVTPAVEDVMDTVTGPNEELFTPILGSPVTPPGITEEAPSTSPALADPEASSERRTAAPSFSYVNTAASYGLDQLESEEGEDDEDEEDEEEEDEEEEDEEEDEEDKDADSLDEALGDTELPGFTLPGITSQEPGLEQENVVSLEGVTFQVPDAIQWEQQNQGLVRSWMEKLKDKAGYMSGMLVPVGVGIAGALFILGALYSIKVMNRRRRNGFKRHKRKQREFNSMQDRVMLLADSSEDEF.

The N-terminal stretch at 1–27 (MSRPIVLHICLAFCSLLLLNFAAQCLA) is a signal peptide. At 28 to 700 (FPNLERREIV…KDKAGYMSGM (673 aa)) the chain is on the extracellular side. Disordered stretches follow at residues 49 to 69 (LNTD…SGDP), 117 to 143 (GEEV…LTNP), 216 to 243 (RTEK…TEPS), 373 to 392 (HGGE…PMGD), 474 to 495 (TRGE…DAPR), and 536 to 652 (NEEL…SQEP). The N-linked (GlcNAc...) asparagine glycan is linked to asparagine 56. Basic and acidic residues predominate over residues 216–228 (RTEKFEANPEHKT). Over residues 380 to 390 (DQSSVTPTSPM) the composition is skewed to polar residues. Basic and acidic residues predominate over residues 474–484 (TRGEDETKGGR). The segment covering 594–635 (LESEEGEDDEDEEDEEEEDEEEEDEEEDEEDKDADSLDEALG) has biased composition (acidic residues). The helical transmembrane segment at 701 to 721 (LVPVGVGIAGALFILGALYSI) threads the bilayer. The Cytoplasmic portion of the chain corresponds to 722–760 (KVMNRRRRNGFKRHKRKQREFNSMQDRVMLLADSSEDEF). Phosphoserine occurs at positions 755 and 756.

In terms of assembly, interacts with IL6ST; this interaction prevents IL6ST protein homodimerization and bridges ARMH4 with IL6R and STAT3 and therefore inhibits phosphorylation of STAT3 at 'Tyr-705'. Interacts (via cytoplasmic tail) with RICTOR; this interaction bridges ARMH4 to the mTORC2 complex and inhibits the mTORC2 kinase activity.

It localises to the membrane. Its function is as follows. May modulate immune response and may play a role in inflammation. Down-modulates STAT3 signaling throught direct interaction with IL6ST, resulting in the inhibition of phosphorylation of STAT3 at Tyr-705. May negatively regulates AKT signaling by modulating the activity of mTORC2 complex through RICTOR interaction. The chain is Armadillo-like helical domain-containing protein 4 from Bos taurus (Bovine).